We begin with the raw amino-acid sequence, 213 residues long: Orotate phosphoribosyltransferase (213 aa).

Residue Lys26 coordinates 5-phospho-alpha-D-ribose 1-diphosphate. Phe34–Phe35 contributes to the orotate binding site. 5-phospho-alpha-D-ribose 1-diphosphate-binding positions include Tyr72 to Lys73, Arg99, Lys100, Lys103, His105, and Asp124 to Ala132. The orotate site is built by Thr128 and Arg156.

This sequence belongs to the purine/pyrimidine phosphoribosyltransferase family. PyrE subfamily. In terms of assembly, homodimer. The cofactor is Mg(2+).

The catalysed reaction is orotidine 5'-phosphate + diphosphate = orotate + 5-phospho-alpha-D-ribose 1-diphosphate. The protein operates within pyrimidine metabolism; UMP biosynthesis via de novo pathway; UMP from orotate: step 1/2. Functionally, catalyzes the transfer of a ribosyl phosphate group from 5-phosphoribose 1-diphosphate to orotate, leading to the formation of orotidine monophosphate (OMP). This chain is Orotate phosphoribosyltransferase, found in Vibrio cholerae serotype O1 (strain ATCC 39315 / El Tor Inaba N16961).